The chain runs to 82 residues: UPF0213 protein SERP0126 (82 aa).

Residues 2 to 77 (DKHFVYIVKC…KTYTRQQKLK (76 aa)) form the GIY-YIG domain.

Belongs to the UPF0213 family.

This chain is UPF0213 protein SERP0126, found in Staphylococcus epidermidis (strain ATCC 35984 / DSM 28319 / BCRC 17069 / CCUG 31568 / BM 3577 / RP62A).